The sequence spans 340 residues: UDP-N-acetylglucosamine--N-acetylmuramyl-(pentapeptide) pyrophosphoryl-undecaprenol N-acetylglucosamine transferase (340 aa).

UDP-N-acetyl-alpha-D-glucosamine contacts are provided by residues 10 to 12 (TGG), N110, S171, and Q272.

Belongs to the glycosyltransferase 28 family. MurG subfamily.

The protein resides in the cell membrane. It catalyses the reaction di-trans,octa-cis-undecaprenyl diphospho-N-acetyl-alpha-D-muramoyl-L-alanyl-D-glutamyl-meso-2,6-diaminopimeloyl-D-alanyl-D-alanine + UDP-N-acetyl-alpha-D-glucosamine = di-trans,octa-cis-undecaprenyl diphospho-[N-acetyl-alpha-D-glucosaminyl-(1-&gt;4)]-N-acetyl-alpha-D-muramoyl-L-alanyl-D-glutamyl-meso-2,6-diaminopimeloyl-D-alanyl-D-alanine + UDP + H(+). It participates in cell wall biogenesis; peptidoglycan biosynthesis. Its function is as follows. Cell wall formation. Catalyzes the transfer of a GlcNAc subunit on undecaprenyl-pyrophosphoryl-MurNAc-pentapeptide (lipid intermediate I) to form undecaprenyl-pyrophosphoryl-MurNAc-(pentapeptide)GlcNAc (lipid intermediate II). This is UDP-N-acetylglucosamine--N-acetylmuramyl-(pentapeptide) pyrophosphoryl-undecaprenol N-acetylglucosamine transferase from Wolbachia pipientis subsp. Culex pipiens (strain wPip).